The chain runs to 135 residues: Ribonuclease P protein component (135 aa).

Belongs to the RnpA family. As to quaternary structure, consists of a catalytic RNA component (M1 or rnpB) and a protein subunit.

It carries out the reaction Endonucleolytic cleavage of RNA, removing 5'-extranucleotides from tRNA precursor.. Its function is as follows. RNaseP catalyzes the removal of the 5'-leader sequence from pre-tRNA to produce the mature 5'-terminus. It can also cleave other RNA substrates such as 4.5S RNA. The protein component plays an auxiliary but essential role in vivo by binding to the 5'-leader sequence and broadening the substrate specificity of the ribozyme. This chain is Ribonuclease P protein component, found in Pseudomonas aeruginosa (strain LESB58).